The sequence spans 181 residues: Lysozyme C (181 aa).

The first 19 residues, 1-19, serve as a signal peptide directing secretion; the sequence is MRIAFFLLILSIIVGLAYG. Residues 139-181 constitute a propeptide that is removed on maturation; it reads LTDSRPLGPFNVTEEEMDQLFIDHEIAMAQCEAEKTCNGFDLE.

The protein belongs to the dictyostelium lysozyme family. Contains six disulfide bonds.

The protein resides in the cytoplasmic vesicle lumen. The enzyme catalyses Hydrolysis of (1-&gt;4)-beta-linkages between N-acetylmuramic acid and N-acetyl-D-glucosamine residues in a peptidoglycan and between N-acetyl-D-glucosamine residues in chitodextrins.. In terms of biological role, has antibacterial activity. The protein is Lysozyme C (alyC) of Dictyostelium discoideum (Social amoeba).